The following is a 250-amino-acid chain: 2,3-bisphosphoglycerate-dependent phosphoglycerate mutase (250 aa).

Substrate contacts are provided by residues 10–17 (RHGESVWN), 23–24 (TG), arginine 62, 89–92 (ERHY), lysine 100, 116–117 (RR), and 185–186 (GN). The active-site Tele-phosphohistidine intermediate is histidine 11. Residue glutamate 89 is the Proton donor/acceptor of the active site.

This sequence belongs to the phosphoglycerate mutase family. BPG-dependent PGAM subfamily. As to quaternary structure, homodimer.

The catalysed reaction is (2R)-2-phosphoglycerate = (2R)-3-phosphoglycerate. The protein operates within carbohydrate degradation; glycolysis; pyruvate from D-glyceraldehyde 3-phosphate: step 3/5. Catalyzes the interconversion of 2-phosphoglycerate and 3-phosphoglycerate. The chain is 2,3-bisphosphoglycerate-dependent phosphoglycerate mutase from Proteus mirabilis (strain HI4320).